Consider the following 1361-residue polypeptide: DNA-directed RNA polymerase subunit beta (1361 aa).

Belongs to the RNA polymerase beta chain family. In terms of assembly, the RNAP catalytic core consists of 2 alpha, 1 beta, 1 beta' and 1 omega subunit. When a sigma factor is associated with the core the holoenzyme is formed, which can initiate transcription.

It catalyses the reaction RNA(n) + a ribonucleoside 5'-triphosphate = RNA(n+1) + diphosphate. In terms of biological role, DNA-dependent RNA polymerase catalyzes the transcription of DNA into RNA using the four ribonucleoside triphosphates as substrates. This Saccharophagus degradans (strain 2-40 / ATCC 43961 / DSM 17024) protein is DNA-directed RNA polymerase subunit beta.